A 522-amino-acid polypeptide reads, in one-letter code: Neuropeptide FF receptor 2 (522 aa).

Residues 1 to 147 lie on the Extracellular side of the membrane; that stretch reads MNSFFGTPAA…NYYLHQPQVA (147 aa). A disordered region spans residues 25-49; the sequence is KEAGRERRALSVQQRGGPAWSGSLE. Residues Asn-110, Asn-122, and Asn-133 are each glycosylated (N-linked (GlcNAc...) asparagine). Residues 148–168 form a helical membrane-spanning segment; that stretch reads AIFIISYFLIFFLCMMGNTVV. At 169–184 the chain is on the cytoplasmic side; sequence CFIVMRNKHMHTVTNL. The chain crosses the membrane as a helical span at residues 185–205; it reads FILNLAISDLLVGIFCMPITL. The Extracellular segment spans residues 206 to 221; it reads LDNIIAGWPFGNTMCK. Residues Cys-220 and Cys-308 are joined by a disulfide bond. A helical membrane pass occupies residues 222–242; that stretch reads ISGLVQGISVAASVFTLVAIA. Over 243–262 the chain is Cytoplasmic; that stretch reads VDRFQCVVYPFKPKLTIKTA. A helical transmembrane segment spans residues 263–283; it reads FVIIMIIWVLAITIMSPSAVM. Residues 284–319 lie on the Extracellular side of the membrane; that stretch reads LHVQEEKYYRVRLNSQNKTSPVYWCREDWPNQEMRK. Residue Asn-300 is glycosylated (N-linked (GlcNAc...) asparagine). Residues 320 to 340 traverse the membrane as a helical segment; it reads IYTTVLFANIYLAPLSLIVIM. At 341–377 the chain is on the cytoplasmic side; that stretch reads YGRIGISLFRAAVPHTGRKNQEQWHVVSRKKQKIIKM. A helical transmembrane segment spans residues 378–398; the sequence is LLIVALLFILSWLPLWTLMML. The Extracellular portion of the chain corresponds to 399-413; the sequence is SDYADLSPNELQIIN. Residues 414-434 form a helical membrane-spanning segment; that stretch reads IYIYPFAHWLAFGNSSVNPII. Over 435–522 the chain is Cytoplasmic; that stretch reads YGFFNENFRR…LKETTNSSEI (88 aa).

Belongs to the G-protein coupled receptor 1 family. In terms of tissue distribution, isoform 1 is abundant in placenta. Relatively highly expressed in thymus, testis, and small intestine. Expressed at low levels in several tissues including spleen, prostate, brain, heart, ovary, colon, kidney, lung, liver and pancreas and not expressed in skeletal muscle and leukocytes. Isoform 2 expression is highest in placenta (but at relatively low level compared to isoform 1). Very low level of expression in numerous tissues including adipose tissue and many brain regions. Isoform 3 is expressed in brain and heart and, at lower levels, in kidney, liver, lung and pancreas.

The protein localises to the cell membrane. Receptor for NPAF (A-18-F-amide) and NPFF (F-8-F-amide) neuropeptides, also known as morphine-modulating peptides. Can also be activated by a variety of naturally occurring or synthetic FMRF-amide like ligands. This receptor mediates its action by association with G proteins that activate a phosphatidylinositol-calcium second messenger system. The polypeptide is Neuropeptide FF receptor 2 (Homo sapiens (Human)).